The chain runs to 553 residues: Membrane protein insertase YidC (553 aa).

The next 5 membrane-spanning stretches (helical) occupy residues 7 to 24 (VLWV…DNWQ), 365 to 385 (WGWA…PLSA), 435 to 455 (LPVV…LASV), 474 to 494 (PYFI…SLNP), and 509 to 529 (PIAF…YYVV).

It belongs to the OXA1/ALB3/YidC family. Type 1 subfamily. As to quaternary structure, interacts with the Sec translocase complex via SecD. Specifically interacts with transmembrane segments of nascent integral membrane proteins during membrane integration.

It localises to the cell inner membrane. In terms of biological role, required for the insertion and/or proper folding and/or complex formation of integral membrane proteins into the membrane. Involved in integration of membrane proteins that insert both dependently and independently of the Sec translocase complex, as well as at least some lipoproteins. Aids folding of multispanning membrane proteins. In Burkholderia multivorans (strain ATCC 17616 / 249), this protein is Membrane protein insertase YidC.